The chain runs to 1180 residues: Integrin alpha-1 (1180 aa).

A signal peptide spans 1-28; it reads MVPRRPASLEVTVACIWLLTVILGFCVS. Residues 29-1142 are Extracellular-facing; it reads FNVDVKNSMS…SKDGLPGRVP (1114 aa). The stretch at 30–91 is one FG-GAP 1 repeat; that stretch reads NVDVKNSMSF…CPVGRERAMP (62 aa). The cysteines at positions 82 and 92 are disulfide-linked. N100, N105, N112, N217, N317, N341, N402, N418, and N459 each carry an N-linked (GlcNAc...) asparagine glycan. The stretch at 101–160 is one FG-GAP 2 repeat; that stretch reads TSIPNVTEIKENMTFGSTLVTNPNGGFLACGPLYAYRCGHLHYTTGICSDVSPTFQVVNS. Residues 175-364 form the VWFA domain; the sequence is IVLDGSNSIY…LGERIFALEA (190 aa). One copy of the FG-GAP 3 repeat lies at 365–417; it reads TADQSAASFEMEMSQTGFSAHYSQDWVMLGAVGAYDWNGTVVMQKANQMVIPH. 4 FG-GAP repeats span residues 422-474, 475-537, 556-614, and 618-678; these read QTEP…DGNI, NILQ…RFEY, SCTK…TIRE, and QRIP…FEPN. Ca(2+)-binding residues include D497, D499, D501, and D505. N531 carries N-linked (GlcNAc...) asparagine glycosylation. Residues D579, N581, D583, D587, D641, N643, D645, and D649 each coordinate Ca(2+). A disulfide bridge connects residues C687 and C696. 3 N-linked (GlcNAc...) asparagine glycosylation sites follow: N698, N747, and N779. The cysteines at positions 702 and 755 are disulfide-linked. A disulfide bridge links C807 with C813. 8 N-linked (GlcNAc...) asparagine glycosylation sites follow: N820, N839, N882, N907, N938, N965, N973, and N1007. Residues C877 and C885 are joined by a disulfide bond. Disulfide bonds link C1029–C1062 and C1066–C1073. N1084, N1103, and N1114 each carry an N-linked (GlcNAc...) asparagine glycan. Residues 1143–1165 traverse the membrane as a helical segment; that stretch reads LWVILLSAFAGLLLLMLLILALW. Topologically, residues 1166–1180 are cytoplasmic; sequence KIGFFKRPLKKKMEK. The GFFKR motif signature appears at 1168-1172; it reads GFFKR.

Belongs to the integrin alpha chain family. Heterodimer of an alpha and a beta subunit. Alpha-1 associates with beta-1. Interacts with RAB21. Interacts (via cytoplasmic domain) with PTPN2; activates PTPN2 phosphatase activity towards EGFR and negatively regulates EGF signaling.

Its subcellular location is the membrane. Functionally, integrin alpha-1/beta-1 is a receptor for laminin and collagen. It recognizes the proline-hydroxylated sequence G-F-P-G-E-R in collagen. Involved in anchorage-dependent, negative regulation of EGF-stimulated cell growth. The sequence is that of Integrin alpha-1 (Itga1) from Rattus norvegicus (Rat).